Here is a 398-residue protein sequence, read N- to C-terminus: Glucose-1-phosphate adenylyltransferase (398 aa).

Residues Tyr-100, Gly-165, 180-181, and Ser-191 each bind alpha-D-glucose 1-phosphate; that span reads EK.

Belongs to the bacterial/plant glucose-1-phosphate adenylyltransferase family. As to quaternary structure, homotetramer.

It carries out the reaction alpha-D-glucose 1-phosphate + ATP + H(+) = ADP-alpha-D-glucose + diphosphate. It participates in glycan biosynthesis; glycogen biosynthesis. Involved in the biosynthesis of ADP-glucose, a building block required for the elongation reactions to produce glycogen. Catalyzes the reaction between ATP and alpha-D-glucose 1-phosphate (G1P) to produce pyrophosphate and ADP-Glc. The protein is Glucose-1-phosphate adenylyltransferase of Desulfitobacterium hafniense (strain Y51).